A 20-amino-acid polypeptide reads, in one-letter code: Thrombin-like enzyme Cdc SII (20 aa).

The protein belongs to the peptidase S1 family. Snake venom subfamily. In terms of assembly, monomer. In terms of tissue distribution, expressed by the venom gland.

The protein resides in the secreted. Strongly inhibited by PMSF and moderately inhibited by leupeptin. Not inhibited by EDTA, aprotinin, pepstatin, and bestatin. Functionally, thrombin-like snake venom serine protease that coagulates human plasma and bovine fibrinogen by hydrolysis of the alpha chains (FGA) (minimum coagulation dose is 60 ug on fibrinogen). Has fibrinogenolytic activities, and degrades preferentially the Aalpha chain (FGA). Shows amidolytic activity toward N-benzoyl-L-Arg-p-nitroanilide, has a higher activity than Cdc SI. In vivo, intravenous injection induces defibrin(ogen)ation and a loss of the righting reflex and opisthotoxins, together with a typical gyroxin-like effect (18-20 minutes). Subcutaneous injection into the footpads induces moderate edema. Potentiates local hemorrhagic activity induced by metalloproteinases (BaP1). This is Thrombin-like enzyme Cdc SII from Crotalus durissus cumanensis (South American rattlesnake).